The chain runs to 930 residues: Translation initiation factor IF-2 (930 aa).

Residues 50–67 (FKPAAAPKVEAKPAAPKV) are compositionally biased toward low complexity. Disordered stretches follow at residues 50–195 (FKPA…PRID) and 260–346 (EVVP…HELP). 2 stretches are compositionally biased toward basic and acidic residues: residues 68 to 90 (SAEK…EAKP) and 110 to 125 (FKAE…AERR). The segment covering 129-141 (KGNNRDQQQNGNR) has biased composition (low complexity). Basic and acidic residues-rich tracts occupy residues 157-167 (RDNRRFNDQAK) and 262-295 (VPEK…DGPR). Residues 309 to 318 (NQKNSNWNNN) show a composition bias toward low complexity. Residues 337–346 (VTERKFHELP) show a composition bias toward basic and acidic residues. The tr-type G domain occupies 432–599 (ERPPVVTIMG…TVLLVAEIQE (168 aa)). The segment at 441–448 (GHVDHGKT) is G1. 441 to 448 (GHVDHGKT) lines the GTP pocket. A G2 region spans residues 466–470 (GITQH). The interval 487 to 490 (DTPG) is G3. Residues 487-491 (DTPGH) and 541-544 (NKID) each bind GTP. The segment at 541–544 (NKID) is G4. The interval 577–579 (SAK) is G5.

The protein belongs to the TRAFAC class translation factor GTPase superfamily. Classic translation factor GTPase family. IF-2 subfamily.

Its subcellular location is the cytoplasm. Functionally, one of the essential components for the initiation of protein synthesis. Protects formylmethionyl-tRNA from spontaneous hydrolysis and promotes its binding to the 30S ribosomal subunits. Also involved in the hydrolysis of GTP during the formation of the 70S ribosomal complex. The chain is Translation initiation factor IF-2 from Streptococcus pneumoniae (strain ATCC BAA-255 / R6).